A 464-amino-acid polypeptide reads, in one-letter code: ATP synthase subunit beta (464 aa).

ATP is bound at residue 148–155 (GGAGVGKT).

This sequence belongs to the ATPase alpha/beta chains family. F-type ATPases have 2 components, CF(1) - the catalytic core - and CF(0) - the membrane proton channel. CF(1) has five subunits: alpha(3), beta(3), gamma(1), delta(1), epsilon(1). CF(0) has three main subunits: a(1), b(2) and c(9-12). The alpha and beta chains form an alternating ring which encloses part of the gamma chain. CF(1) is attached to CF(0) by a central stalk formed by the gamma and epsilon chains, while a peripheral stalk is formed by the delta and b chains.

It localises to the cell inner membrane. It carries out the reaction ATP + H2O + 4 H(+)(in) = ADP + phosphate + 5 H(+)(out). Its function is as follows. Produces ATP from ADP in the presence of a proton gradient across the membrane. The catalytic sites are hosted primarily by the beta subunits. The chain is ATP synthase subunit beta from Acinetobacter baylyi (strain ATCC 33305 / BD413 / ADP1).